We begin with the raw amino-acid sequence, 91 residues long: Small nuclear ribonucleoprotein F (91 aa).

Positions 8–81 (APKPFLYDLK…VLFVRGIDDE (74 aa)) constitute a Sm domain.

The protein belongs to the snRNP Sm proteins family. SmF/LSm6 subfamily. Core component of the spliceosomal U1, U2, U4 and U5 small nuclear ribonucleoproteins (snRNPs), the building blocks of the spliceosome. Most spliceosomal snRNPs contain a common set of Sm proteins, SNRPB, SNRPD1, SNRPD2, SNRPD3, SNRPE, SNRPF and SNRPG that assemble in a heptameric protein ring on the Sm site of the small nuclear RNA to form the core snRNP. Component of the U1 snRNP. Component of the U4/U6-U5 tri-snRNP complex. Component of the U7 snRNP complex. Component of the U11/U12 snRNPs that are part of the U12-type spliceosome. Part of the SMN-Sm complex that catalyzes core snRNPs assembly.

It is found in the cytoplasm. It localises to the cytosol. The protein resides in the nucleus. In terms of biological role, plays a role in pre-mRNA splicing as a core component of the spliceosomal U1, U2, U4 and U5 small nuclear ribonucleoproteins (snRNPs), the building blocks of the spliceosome. Component of both the pre-catalytic spliceosome B complex and activated spliceosome C complexes. Is also a component of the minor U12 spliceosome. The polypeptide is Small nuclear ribonucleoprotein F (snrpf) (Dictyostelium discoideum (Social amoeba)).